The sequence spans 283 residues: Rhomboid-like protease 2 (283 aa).

Residues 1–11 show a composition bias toward polar residues; it reads MANIRTLSDYA. The disordered stretch occupies residues 1–26; sequence MANIRTLSDYASSPPRGSSALEGEVG. 3 helical membrane passes run 62-82, 114-134, and 149-169; these read IIII…AGLA, ICPL…WVQI, and LLAV…AVLF. Residue Ser178 is the Nucleophile of the active site. A run of 4 helical transmembrane segments spans residues 179–199, 205–225, 227–247, and 260–280; these read TAVF…WHAI, AIIS…GSHM, SVGH…LNEN, and LTSQ…IFLV. Residue His230 is part of the active site.

It belongs to the peptidase S54 family.

It is found in the membrane. It carries out the reaction Cleaves type-1 transmembrane domains using a catalytic dyad composed of serine and histidine that are contributed by different transmembrane domains.. Its function is as follows. Serine protease involved in intramembrane proteolysis and the subsequent release of polypeptides from their membrane anchors. This chain is Rhomboid-like protease 2 (ROM2), found in Toxoplasma gondii.